The primary structure comprises 228 residues: uncharacterized protein (228 aa).

Transmembrane regions (helical) follow at residues 37-54, 67-89, 104-126, and 138-160; these read WCMHASLTLVLLALTLIV, VVSIYLAFFFSLKILHTFFSTGV, HIGIRLFLLLCASSLFYACTSRL, and VLHVRSTAYTTPCAVYVMMLVLY.

The protein resides in the cell membrane. This is an uncharacterized protein from Treponema pallidum (strain Nichols).